Here is a 430-residue protein sequence, read N- to C-terminus: tRNA(Ile)-lysidine synthase (430 aa).

21–26 (SGGLDS) contributes to the ATP binding site.

It belongs to the tRNA(Ile)-lysidine synthase family.

It is found in the cytoplasm. It carries out the reaction cytidine(34) in tRNA(Ile2) + L-lysine + ATP = lysidine(34) in tRNA(Ile2) + AMP + diphosphate + H(+). Its function is as follows. Ligates lysine onto the cytidine present at position 34 of the AUA codon-specific tRNA(Ile) that contains the anticodon CAU, in an ATP-dependent manner. Cytidine is converted to lysidine, thus changing the amino acid specificity of the tRNA from methionine to isoleucine. This is tRNA(Ile)-lysidine synthase from Salmonella choleraesuis (strain SC-B67).